The chain runs to 156 residues: Small ribosomal subunit protein uS7 (156 aa).

The protein belongs to the universal ribosomal protein uS7 family. In terms of assembly, part of the 30S ribosomal subunit. Contacts proteins S9 and S11.

Functionally, one of the primary rRNA binding proteins, it binds directly to 16S rRNA where it nucleates assembly of the head domain of the 30S subunit. Is located at the subunit interface close to the decoding center, probably blocks exit of the E-site tRNA. The protein is Small ribosomal subunit protein uS7 of Cutibacterium acnes (strain DSM 16379 / KPA171202) (Propionibacterium acnes).